Consider the following 113-residue polypeptide: MIKLKVKKGDEVIVVTGKYKGKKGKVLKVFIDENTVIVSGVNLVKKHTKPNKMSEGGIITKESPIHISNVAHIDPKTGNPTKVAFKFLEDGSKVRIAKKSGEIIGKVGNDVKI.

It belongs to the universal ribosomal protein uL24 family. In terms of assembly, part of the 50S ribosomal subunit.

In terms of biological role, one of two assembly initiator proteins, it binds directly to the 5'-end of the 23S rRNA, where it nucleates assembly of the 50S subunit. Its function is as follows. One of the proteins that surrounds the polypeptide exit tunnel on the outside of the subunit. The chain is Large ribosomal subunit protein uL24 from Rickettsia typhi (strain ATCC VR-144 / Wilmington).